The following is a 395-amino-acid chain: Phosphoglycerate kinase (395 aa).

Substrate-binding positions include Asp-20–Asn-22, Arg-36, His-59–Arg-62, Arg-120, and Arg-157. Residues Lys-208, Gly-296, Glu-327, and Gly-353–Thr-356 contribute to the ATP site.

This sequence belongs to the phosphoglycerate kinase family. As to quaternary structure, monomer.

It localises to the cytoplasm. The enzyme catalyses (2R)-3-phosphoglycerate + ATP = (2R)-3-phospho-glyceroyl phosphate + ADP. Its pathway is carbohydrate degradation; glycolysis; pyruvate from D-glyceraldehyde 3-phosphate: step 2/5. The protein is Phosphoglycerate kinase of Tropheryma whipplei (strain TW08/27) (Whipple's bacillus).